A 193-amino-acid polypeptide reads, in one-letter code: Protein D5 (193 aa).

In terms of biological role, repression of replication initiation (possible). The polypeptide is Protein D5 (ddpE) (Dictyostelium discoideum (Social amoeba)).